Here is a 366-residue protein sequence, read N- to C-terminus: UDP-N-acetylglucosamine--N-acetylmuramyl-(pentapeptide) pyrophosphoryl-undecaprenol N-acetylglucosamine transferase (366 aa).

UDP-N-acetyl-alpha-D-glucosamine is bound by residues 15 to 17, asparagine 127, arginine 175, serine 201, isoleucine 255, and glutamine 300; that span reads TGG.

It belongs to the glycosyltransferase 28 family. MurG subfamily.

The protein resides in the cell inner membrane. It catalyses the reaction di-trans,octa-cis-undecaprenyl diphospho-N-acetyl-alpha-D-muramoyl-L-alanyl-D-glutamyl-meso-2,6-diaminopimeloyl-D-alanyl-D-alanine + UDP-N-acetyl-alpha-D-glucosamine = di-trans,octa-cis-undecaprenyl diphospho-[N-acetyl-alpha-D-glucosaminyl-(1-&gt;4)]-N-acetyl-alpha-D-muramoyl-L-alanyl-D-glutamyl-meso-2,6-diaminopimeloyl-D-alanyl-D-alanine + UDP + H(+). Its pathway is cell wall biogenesis; peptidoglycan biosynthesis. Its function is as follows. Cell wall formation. Catalyzes the transfer of a GlcNAc subunit on undecaprenyl-pyrophosphoryl-MurNAc-pentapeptide (lipid intermediate I) to form undecaprenyl-pyrophosphoryl-MurNAc-(pentapeptide)GlcNAc (lipid intermediate II). The protein is UDP-N-acetylglucosamine--N-acetylmuramyl-(pentapeptide) pyrophosphoryl-undecaprenol N-acetylglucosamine transferase of Thiobacillus denitrificans (strain ATCC 25259 / T1).